The chain runs to 580 residues: Mucolipin-1 (580 aa).

The interval 1–38 (MTDPAGPRGSETERLLTPNPGYGTQVGPSPAPPTPPEE) is disordered. Over 1-65 (MTDPAGPRGS…FRAKGRKPCK (65 aa)) the chain is Cytoplasmic. At S10 the chain carries Phosphoserine. A Dileucine motif; mediates targeting to lysosomes motif is present at residues 11 to 16 (ETERLL). The tract at residues 42 to 62 (RRRLKYFFMSPCDKFRAKGRK) is interaction with phosphoinositides. Residues 66 to 86 (LMLQVVKILVVTVQLILFGLS) traverse the membrane as a helical segment. The Extracellular portion of the chain corresponds to 87–298 (NQLAVTFREE…VFRHGDNSFR (212 aa)). The tract at residues 107 to 121 (LGYSDGADDTFAAYT) is extracellular/lumenal pore loop. A disulfide bond links C166 and C192. N230 carries N-linked (GlcNAc...) asparagine glycosylation. C253 and C284 are disulfide-bonded. The chain crosses the membrane as a helical span at residues 299-321 (LLFDVVVILTCSLSFLLCARSLL). Over 322–350 (RGFLLQNEFVRFMWRQRRRVISLWERLEF) the chain is Cytoplasmic. Residues 351 to 371 (VNGWYILLVTSDVLTISGTIM) form a helical membrane-spanning segment. Residues 372 to 382 (KIGIEAKNLAS) are Extracellular-facing. The helical transmembrane segment at 383 to 405 (YDVCSILLGTSTLLVWVGVIRYL) threads the bilayer. Residues 406-427 (TFFHNYNILIATLRVALPSVMR) lie on the Cytoplasmic side of the membrane. Residues 428 to 448 (FCCCVAVIYLGYCFCGWIVLG) form a helical membrane-spanning segment. Topologically, residues 449 to 456 (PYHVKFRS) are extracellular. Positions 457–477 (LSMVSECLFSLINGDDMFVTF) form an intramembrane region, pore-forming. Residues 469 to 474 (NGDDMF) carry the Selectivity filter motif. Residues 478–491 (AAMQAQQGRSSLVW) lie on the Extracellular side of the membrane. A helical membrane pass occupies residues 492-513 (LFSQLYLYSFISLFIYMVLSLF). The Cytoplasmic segment spans residues 514–580 (IALITGAYDT…PSEEHSLLVN (67 aa)). Phosphoserine; by PAK is present on residues S557 and S559. The tract at residues 565 to 567 (CCC) is required for palmitoylation and association with membranes. The Dileucine internalization motif; mediates AP2 complex-dependent internalization signature appears at 573 to 578 (EEHSLL).

It belongs to the transient receptor (TC 1.A.4) family. Polycystin subfamily. MCOLN1 sub-subfamily. In terms of assembly, homotetramer. Homooligomer. Can heterooligomerize with MCOLN2 or MCOLN3; heteromeric assemblies have different channel properties as compared to the respective homooligomers and may be tissue-specific. Interacts with PDCD6. Interacts with TMEM163. Interacts with LAPTM4B. Post-translationally, palmitoylated; involved in association with membranes. Phosphorylation by PKA inhibits channel activity. Dephosphorylation increases activity. In terms of processing, proteolytically cleaved probably involving multiple lysosomal proteases including cathepsin B; inhibits lysosomal channel activity.

The protein resides in the late endosome membrane. It is found in the lysosome membrane. It localises to the cytoplasmic vesicle membrane. The protein localises to the cell projection. Its subcellular location is the phagocytic cup. The protein resides in the cytoplasmic vesicle. It is found in the phagosome membrane. It localises to the cell membrane. It carries out the reaction Ca(2+)(in) = Ca(2+)(out). The enzyme catalyses Fe(2+)(in) = Fe(2+)(out). The catalysed reaction is Mg(2+)(in) = Mg(2+)(out). It catalyses the reaction K(+)(in) = K(+)(out). It carries out the reaction Na(+)(in) = Na(+)(out). Channel activity is controlled by multiple regulatory mechanisms in different subcellular compartments. Channel function is transiently modulated by changes in Ca(2+) in a pH-dependent manner; pH changes modify the aggregation state of unitary channels; a negative cooperativity between extracellular/lumenal Ca(2+) and H(+) is suggested. Regulated by phosphoinositides in a compartment-specific manner: in lysosomes activated by PtdIns(3,5)P2 (Phosphatidylinositol 3,5-bisphosphate) and at the plasma membrane inhibited by PtdIns(4,5)P2 (Phosphatidylinositol 4,5-bisphosphate). In terms of biological role, nonselective cation channel probably playing a role in the regulation of membrane trafficking events and of metal homeostasis. Acts as a Ca(2+)-permeable cation channel with inwardly rectifying activity. Proposed to play a major role in Ca(2+) release from late endosome and lysosome vesicles to the cytoplasm, which is important for many lysosome-dependent cellular events, including the fusion and trafficking of these organelles, exocytosis and autophagy. Required for efficient uptake of large particles in macrophages in which Ca(2+) release from the lysosomes triggers lysosomal exocytosis. May also play a role in phagosome-lysosome fusion. Involved in lactosylceramide trafficking indicative for a role in the regulation of late endocytic membrane fusion/fission events. By mediating lysosomal Ca(2+) release is involved in regulation of mTORC1 signaling and in mTOR/TFEB-dependent lysosomal adaptation to environmental cues such as nutrient levels. Seems to act as lysosomal active oxygen species (ROS) sensor involved in ROS-induced TFEB activation and autophagy. Also functions as a Fe(2+) permeable channel in late endosomes and lysosomes. Also permeable to Mg(2+), Na(+). K(+) and Cs(+). Proposed to play a role in zinc homeostasis probably implicating its association with TMEM163. In adaptive immunity, TRPML2 and TRPML1 may play redundant roles in the function of the specialized lysosomes of B cells. Functionally, may contribute to cellular lipase activity within the late endosomal pathway or at the cell surface which may be involved in processes of membrane reshaping and vesiculation, especially the growth of tubular structures. However, it is not known, whether it conveys the enzymatic activity directly, or merely facilitates the activity of an associated phospholipase. The sequence is that of Mucolipin-1 (MCOLN1) from Macaca fascicularis (Crab-eating macaque).